The chain runs to 303 residues: Putative S-adenosyl-L-methionine-dependent methyltransferase ML2020 (303 aa).

S-adenosyl-L-methionine is bound by residues Asp130 and 159 to 160 (DL).

It belongs to the UPF0677 family.

Its function is as follows. Exhibits S-adenosyl-L-methionine-dependent methyltransferase activity. This is Putative S-adenosyl-L-methionine-dependent methyltransferase ML2020 from Mycobacterium leprae (strain TN).